Reading from the N-terminus, the 404-residue chain is Epoxide hydrolase 1 (404 aa).

The helical transmembrane segment at 74 to 96 (ILVRLLQFYYFVKFSAILFLGFA) threads the bilayer. Residues 140 to 389 (PLMLFIHGYP…ASHWVQQDEP (250 aa)) enclose the AB hydrolase-1 domain. Residue Asp215 is the Nucleophile of the active site. Tyr327 functions as the Proton donor in the catalytic mechanism. Residue His382 is the Proton acceptor of the active site.

The protein belongs to the AB hydrolase superfamily. Epoxide hydrolase family.

The protein localises to the membrane. The enzyme catalyses an epoxide + H2O = an ethanediol. The catalysed reaction is 8,9-epoxy-(5Z,11Z,14Z)-eicosatrienoate + H2O = 8,9-dihydroxy-(5Z,11Z,14Z)-eicosatrienoate. It carries out the reaction 11,12-epoxy-(5Z,8Z,14Z)-eicosatrienoate + H2O = 11,12-dihydroxy-(5Z,8Z,14Z)-eicosatrienoate. It catalyses the reaction 14,15-epoxy-(5Z,8Z,11Z)-eicosatrienoate + H2O = 14,15-dihydroxy-(5Z,8Z,11Z)-eicosatrienoate. The enzyme catalyses 12,13-epoxy-(9Z)-octadecenoate + H2O = 12,13-dihydroxy-(9Z)-octadecenoate. The catalysed reaction is 9,10-epoxy-(12Z)-octadecenoate + H2O = 9,10-dihydroxy-(12Z)-octadecenoate. It participates in lipid metabolism. In terms of biological role, catalyzes the hydrolysis of epoxide-containing fatty acids. Active against epoxyeicosatrienoic acids (EETs) including 8,9-epoxy-(5Z,11Z,14Z)-eicosatrienoate (8,9-EET), 11,12-epoxy-(5Z,8Z,14Z)-eicosatrienoate (11,12-EET) and 14,15-epoxy-(5Z,8Z,11Z)-eicosatrienoate (14,15-EET) and the linoleic acid metabolites 12,13-epoxy-(9Z)-octadecenoate (12,13-EpOME) and 9,10-epoxy-(12Z)-octadecenoate (9,10-EpOME). These epoxides function as lipid signaling molecules, the enzyme can deplete the supply of the epoxide signal by transforming them into diol species that are more readily eliminated through excretion. The sequence is that of Epoxide hydrolase 1 from Caenorhabditis elegans.